Here is a 199-residue protein sequence, read N- to C-terminus: Histone deacetylase complex subunit SAP25 (199 aa).

Composition is skewed to polar residues over residues 151-163 (QMSQ…SSSA) and 184-199 (QGAD…THCP). The disordered stretch occupies residues 151-199 (QMSQGEPRPSSSAVGPPDHTSDPPSPCGSPSSSQGADLSLPQTPDTHCP).

As to quaternary structure, may be a component of the mSIN3A corepressor complex. Interacts with SIN3A. Interacts with HDAC2.

The protein resides in the nucleus. The protein localises to the cytoplasm. In terms of biological role, involved in the transcriptional repression mediated by the mSIN3A but not the N-CoR corepressor complex. This Homo sapiens (Human) protein is Histone deacetylase complex subunit SAP25 (SAP25).